Here is a 338-residue protein sequence, read N- to C-terminus: Anthranilate phosphoribosyltransferase (338 aa).

Residues glycine 81, 84-85, threonine 89, 91-94, 109-117, and serine 121 each bind 5-phospho-alpha-D-ribose 1-diphosphate; these read GD, NIST, and KHGNRSMVS. Residue glycine 81 coordinates anthranilate. Serine 93 serves as a coordination point for Mg(2+). Asparagine 112 contributes to the anthranilate binding site. Arginine 167 is an anthranilate binding site. 2 residues coordinate Mg(2+): aspartate 226 and glutamate 227.

This sequence belongs to the anthranilate phosphoribosyltransferase family. Homodimer. Mg(2+) serves as cofactor.

The enzyme catalyses N-(5-phospho-beta-D-ribosyl)anthranilate + diphosphate = 5-phospho-alpha-D-ribose 1-diphosphate + anthranilate. The protein operates within amino-acid biosynthesis; L-tryptophan biosynthesis; L-tryptophan from chorismate: step 2/5. Functionally, catalyzes the transfer of the phosphoribosyl group of 5-phosphorylribose-1-pyrophosphate (PRPP) to anthranilate to yield N-(5'-phosphoribosyl)-anthranilate (PRA). This Acidithiobacillus ferrooxidans (strain ATCC 23270 / DSM 14882 / CIP 104768 / NCIMB 8455) (Ferrobacillus ferrooxidans (strain ATCC 23270)) protein is Anthranilate phosphoribosyltransferase.